A 92-amino-acid polypeptide reads, in one-letter code: MHITSIAIVFFAAMGAVASPIATESDDLDARDVQLSKFGGECSLKHNTCTYLKGGKNHVVNCGSAANKKCKSDRHHCEYDEHHKRVDCQTPV.

Residues 1–18 form the signal peptide; the sequence is MHITSIAIVFFAAMGAVA. The propeptide occupies 19–34; the sequence is SPIATESDDLDARDVQ. 3 cysteine pairs are disulfide-bonded: Cys42–Cys70, Cys49–Cys77, and Cys62–Cys88.

The protein belongs to the antifungal protein pafB family.

The protein localises to the secreted. Its subcellular location is the host cytoplasm. Antifungal protein that acts as an inhibitor of growth of human pathogenic molds and yeasts. This is Antifungal protein B from Penicillium rubens (strain ATCC 28089 / DSM 1075 / NRRL 1951 / Wisconsin 54-1255) (Penicillium chrysogenum).